The following is a 310-amino-acid chain: Manganese ABC transporter substrate-binding lipoprotein scaA (310 aa).

An N-terminal signal peptide occupies residues methionine 1–alanine 19. Cysteine 20 carries N-palmitoyl cysteine lipidation. The S-diacylglycerol cysteine moiety is linked to residue cysteine 20. Mn(2+) contacts are provided by histidine 68, histidine 140, glutamate 206, and aspartate 281.

The protein belongs to the bacterial solute-binding protein 9 family. Lipoprotein receptor antigen (Lrai) subfamily. The complex is composed of two ATP-binding proteins (ScaC), two transmembrane proteins (ScaB) and a solute-binding protein (ScaA).

The protein resides in the cell membrane. In terms of biological role, part of ATP-binding cassette (ABC) transport system ScaABC involved in manganese import. Essential for growth under Mn(2+)-limiting conditions. Also acts as an adhesin which is involved on adherence to extracellular matrix. It is an important factor in pathogenesis and infection. In Streptococcus gordonii, this protein is Manganese ABC transporter substrate-binding lipoprotein scaA.